Here is a 276-residue protein sequence, read N- to C-terminus: Undecaprenyl-diphosphatase (276 aa).

8 consecutive transmembrane segments (helical) span residues 1–21 (MSWL…FLPV), 39–59 (AGAS…LVYF), 84–104 (YRLG…GLLL), 115–135 (LWAI…AEYF), 159–179 (LALL…LFLG), 190–210 (FLLA…DAFA), 222–242 (QLLV…AWFL), and 253–273 (FVGY…TGVV).

It belongs to the UppP family.

The protein localises to the cell membrane. It carries out the reaction di-trans,octa-cis-undecaprenyl diphosphate + H2O = di-trans,octa-cis-undecaprenyl phosphate + phosphate + H(+). Catalyzes the dephosphorylation of undecaprenyl diphosphate (UPP). Confers resistance to bacitracin. This is Undecaprenyl-diphosphatase from Mycobacterium sp. (strain KMS).